A 695-amino-acid polypeptide reads, in one-letter code: Elongation factor G 2 (695 aa).

Residues 5–280 (SLYRNIGIFA…AVVDYLPSPT (276 aa)) form the tr-type G domain. Residues 14–21 (AHVDAGKT), 78–82 (DTPGH), and 132–135 (NKLD) each bind GTP.

Belongs to the TRAFAC class translation factor GTPase superfamily. Classic translation factor GTPase family. EF-G/EF-2 subfamily.

It is found in the cytoplasm. Its function is as follows. Catalyzes the GTP-dependent ribosomal translocation step during translation elongation. During this step, the ribosome changes from the pre-translocational (PRE) to the post-translocational (POST) state as the newly formed A-site-bound peptidyl-tRNA and P-site-bound deacylated tRNA move to the P and E sites, respectively. Catalyzes the coordinated movement of the two tRNA molecules, the mRNA and conformational changes in the ribosome. This chain is Elongation factor G 2, found in Vibrio cholerae serotype O1 (strain ATCC 39315 / El Tor Inaba N16961).